The following is a 222-amino-acid chain: Small ribosomal subunit protein eS1 (222 aa).

Belongs to the eukaryotic ribosomal protein eS1 family.

This Pyrobaculum islandicum (strain DSM 4184 / JCM 9189 / GEO3) protein is Small ribosomal subunit protein eS1.